A 310-amino-acid chain; its full sequence is Cytochrome f (310 aa).

The first 23 residues, 1–23, serve as a signal peptide directing secretion; it reads MRRLLSSTFAALIVGLAVFSAPA. 4 residues coordinate heme: Tyr-28, Cys-48, Cys-51, and His-52. A helical membrane pass occupies residues 277–297; it reads IYGMLAFFAAVALAQIMLVLK.

This sequence belongs to the cytochrome f family. As to quaternary structure, the 4 large subunits of the cytochrome b6-f complex are cytochrome b6, subunit IV (17 kDa polypeptide, PetD), cytochrome f and the Rieske protein, while the 4 small subunits are PetG, PetL, PetM and PetN. The complex functions as a dimer. Heme serves as cofactor.

The protein localises to the cellular thylakoid membrane. Its function is as follows. Component of the cytochrome b6-f complex, which mediates electron transfer between photosystem II (PSII) and photosystem I (PSI), cyclic electron flow around PSI, and state transitions. In Synechococcus sp. (strain CC9311), this protein is Cytochrome f.